The sequence spans 373 residues: Chorismate synthase (373 aa).

Arg-46 provides a ligand contact to NADP(+). FMN contacts are provided by residues 123 to 125 (RSS), 251 to 252 (NA), Gly-295, 310 to 314 (KPTPS), and Arg-337.

It belongs to the chorismate synthase family. It depends on FMNH2 as a cofactor.

The catalysed reaction is 5-O-(1-carboxyvinyl)-3-phosphoshikimate = chorismate + phosphate. It participates in metabolic intermediate biosynthesis; chorismate biosynthesis; chorismate from D-erythrose 4-phosphate and phosphoenolpyruvate: step 7/7. Catalyzes the anti-1,4-elimination of the C-3 phosphate and the C-6 proR hydrogen from 5-enolpyruvylshikimate-3-phosphate (EPSP) to yield chorismate, which is the branch point compound that serves as the starting substrate for the three terminal pathways of aromatic amino acid biosynthesis. This reaction introduces a second double bond into the aromatic ring system. The chain is Chorismate synthase from Methanococcus maripaludis (strain C5 / ATCC BAA-1333).